Here is a 75-residue protein sequence, read N- to C-terminus: RNA-binding protein KhpA (75 aa).

Residues 29–75 enclose the KH domain; that stretch reads SIILELKVSPEDMGKVIGKQGRIAKAIRTVVKAAAIKENKKVVVEII.

It belongs to the KhpA RNA-binding protein family. In terms of assembly, forms a complex with KhpB.

Its subcellular location is the cytoplasm. Its function is as follows. A probable RNA chaperone. Forms a complex with KhpB which binds to cellular RNA and controls its expression. Plays a role in peptidoglycan (PG) homeostasis and cell length regulation. This is RNA-binding protein KhpA from Clostridium perfringens (strain 13 / Type A).